The primary structure comprises 310 residues: Aspartate carbamoyltransferase catalytic subunit (310 aa).

Carbamoyl phosphate-binding residues include R54 and T55. K84 contacts L-aspartate. Carbamoyl phosphate-binding residues include R105, H134, and Q137. Positions 167 and 229 each coordinate L-aspartate. Carbamoyl phosphate is bound by residues L267 and P268.

Belongs to the aspartate/ornithine carbamoyltransferase superfamily. ATCase family. As to quaternary structure, heterododecamer (2C3:3R2) of six catalytic PyrB chains organized as two trimers (C3), and six regulatory PyrI chains organized as three dimers (R2).

It catalyses the reaction carbamoyl phosphate + L-aspartate = N-carbamoyl-L-aspartate + phosphate + H(+). It participates in pyrimidine metabolism; UMP biosynthesis via de novo pathway; (S)-dihydroorotate from bicarbonate: step 2/3. Its function is as follows. Catalyzes the condensation of carbamoyl phosphate and aspartate to form carbamoyl aspartate and inorganic phosphate, the committed step in the de novo pyrimidine nucleotide biosynthesis pathway. This chain is Aspartate carbamoyltransferase catalytic subunit, found in Enterobacter sp. (strain 638).